A 173-amino-acid chain; its full sequence is Methylated-DNA--protein-cysteine methyltransferase (173 aa).

C143 (nucleophile; methyl group acceptor) is an active-site residue.

This sequence belongs to the MGMT family.

It is found in the cytoplasm. The enzyme catalyses a 6-O-methyl-2'-deoxyguanosine in DNA + L-cysteinyl-[protein] = S-methyl-L-cysteinyl-[protein] + a 2'-deoxyguanosine in DNA. The catalysed reaction is a 4-O-methyl-thymidine in DNA + L-cysteinyl-[protein] = a thymidine in DNA + S-methyl-L-cysteinyl-[protein]. In terms of biological role, involved in the cellular defense against the biological effects of O6-methylguanine (O6-MeG) and O4-methylthymine (O4-MeT) in DNA. Repairs the methylated nucleobase in DNA by stoichiometrically transferring the methyl group to a cysteine residue in the enzyme. This is a suicide reaction: the enzyme is irreversibly inactivated. This chain is Methylated-DNA--protein-cysteine methyltransferase, found in Pyrococcus sp. (strain NA2).